The following is a 468-amino-acid chain: Fibrinogen beta chain (468 aa).

Gln-1 is modified (pyrrolidone carboxylic acid). A compositionally biased stretch (acidic residues) spans 1–10 (QFPTDYDEGQ). The segment at 1–54 (QFPTDYDEGQDDRPKVGLGARGHRPYDKKKEEAPSLRPVPPPISGGGYRARPAT) is disordered. An O-linked (GalNAc...) threonine glycan is attached at Thr-4. Tyr-6 is modified (sulfotyrosine). Positions 24–34 (RPYDKKKEEAP) are enriched in basic and acidic residues. A coiled-coil region spans residues 88–204 (KLQDTLVRQE…TQMEYCRTPC (117 aa)). Intrachain disulfides connect Cys-208–Cys-293 and Cys-218–Cys-247. In terms of domain architecture, Fibrinogen C-terminal spans 209–465 (NIPVVSGKEC…KMSMKIRPYF (257 aa)). An N-linked (GlcNAc...) asparagine glycan is attached at Asn-371. Cysteines 401 and 414 form a disulfide.

In terms of assembly, heterohexamer; disulfide linked. Contains 2 sets of 3 non-identical chains (alpha, beta and gamma). The 2 heterotrimers are in head to head conformation with the N-termini in a small central domain. Post-translationally, conversion of fibrinogen to fibrin is triggered by thrombin, which cleaves fibrinopeptides A and B from alpha and beta chains, and thus exposes the N-terminal polymerization sites responsible for the formation of the soft clot. The soft clot is converted into the hard clot by factor XIIIA which catalyzes the epsilon-(gamma-glutamyl)lysine cross-linking between gamma chains (stronger) and between alpha chains (weaker) of different monomers. In terms of tissue distribution, detected in blood plasma (at protein level).

The protein localises to the secreted. In terms of biological role, cleaved by the protease thrombin to yield monomers which, together with fibrinogen alpha (FGA) and fibrinogen gamma (FGG), polymerize to form an insoluble fibrin matrix. Fibrin has a major function in hemostasis as one of the primary components of blood clots. In addition, functions during the early stages of wound repair to stabilize the lesion and guide cell migration during re-epithelialization. Was originally thought to be essential for platelet aggregation, based on in vitro studies using anticoagulated blood. However subsequent studies have shown that it is not absolutely required for thrombus formation in vivo. Enhances expression of SELP in activated platelets. Maternal fibrinogen is essential for successful pregnancy. Fibrin deposition is also associated with infection, where it protects against IFNG-mediated hemorrhage. May also facilitate the antibacterial immune response via both innate and T-cell mediated pathways. The protein is Fibrinogen beta chain (FGB) of Bos taurus (Bovine).